The chain runs to 443 residues: ATP-dependent protease ATPase subunit HslU (443 aa).

ATP contacts are provided by residues Ile18, 60–65, Asp256, Glu321, and Arg393; that span reads GVGKTE.

This sequence belongs to the ClpX chaperone family. HslU subfamily. In terms of assembly, a double ring-shaped homohexamer of HslV is capped on each side by a ring-shaped HslU homohexamer. The assembly of the HslU/HslV complex is dependent on binding of ATP.

Its subcellular location is the cytoplasm. In terms of biological role, ATPase subunit of a proteasome-like degradation complex; this subunit has chaperone activity. The binding of ATP and its subsequent hydrolysis by HslU are essential for unfolding of protein substrates subsequently hydrolyzed by HslV. HslU recognizes the N-terminal part of its protein substrates and unfolds these before they are guided to HslV for hydrolysis. This is ATP-dependent protease ATPase subunit HslU from Buchnera aphidicola subsp. Schizaphis graminum (strain Sg).